Reading from the N-terminus, the 356-residue chain is MFAKLEGLEKKYLELEEALAQPDVFNDQDQYRKLTKAHADLSDVVELFRRHRAVSEELAENRLLLHDEDPEIRAMAQEEVHRGEAELPNLEHELKVMLLPSDPLDEKNTILEIRAGTGGEEAALFAADLFRMYTRYAELKNWKVEIMSESPSENGGYKEIICLIAGDRVYSHLKFEAGTHRVQRVPATEAQGRIHTSAATVAVMPEAEEVDVEIRPEDLRIDIYRASGAGGQHVNKTESAVRITHLPTNTVVTCQDERSQHKNKARAMKVLASRILAAERERQSSELSADRKAQVGSGDRSERIRTYNFPQGRCTDHRINLTLYSLDRIMEGELESLVEALGTAAQAEALKAQASE.

The residue at position 232 (Q232) is an N5-methylglutamine. The tract at residues 281-301 (ERQSSELSADRKAQVGSGDRS) is disordered.

The protein belongs to the prokaryotic/mitochondrial release factor family. Methylated by PrmC. Methylation increases the termination efficiency of RF1.

Its subcellular location is the cytoplasm. In terms of biological role, peptide chain release factor 1 directs the termination of translation in response to the peptide chain termination codons UAG and UAA. This is Peptide chain release factor 1 from Desulfovibrio desulfuricans (strain ATCC 27774 / DSM 6949 / MB).